Here is a 138-residue protein sequence, read N- to C-terminus: Large ribosomal subunit protein uL16 (138 aa).

It belongs to the universal ribosomal protein uL16 family. In terms of assembly, part of the 50S ribosomal subunit.

Functionally, binds 23S rRNA and is also seen to make contacts with the A and possibly P site tRNAs. This is Large ribosomal subunit protein uL16 from Chlamydia trachomatis serovar D (strain ATCC VR-885 / DSM 19411 / UW-3/Cx).